The primary structure comprises 177 residues: Probable DNA-directed RNA polymerase subunit delta (177 aa).

The HTH HARE-type domain occupies 14-81; that stretch reads CSMIEVVHSV…GENRWGLRSW (68 aa). Residues 90 to 177 are disordered; that stretch reads EILPQPKPKK…ETEEEEEEEL (88 aa). A compositionally biased stretch (acidic residues) spans 106–177; the sequence is DGFDDYIEED…ETEEEEEEEL (72 aa).

This sequence belongs to the RpoE family. As to quaternary structure, RNAP is composed of a core of 2 alpha, a beta and a beta' subunits. The core is associated with a delta subunit and one of several sigma factors.

Participates in both the initiation and recycling phases of transcription. In the presence of the delta subunit, RNAP displays an increased specificity of transcription, a decreased affinity for nucleic acids, and an increased efficiency of RNA synthesis because of enhanced recycling. This chain is Probable DNA-directed RNA polymerase subunit delta, found in Bacillus cereus (strain B4264).